A 130-amino-acid chain; its full sequence is Transcription antitermination protein NusB (130 aa).

This sequence belongs to the NusB family.

Involved in transcription antitermination. Required for transcription of ribosomal RNA (rRNA) genes. Binds specifically to the boxA antiterminator sequence of the ribosomal RNA (rrn) operons. This Bacillus mycoides (strain KBAB4) (Bacillus weihenstephanensis) protein is Transcription antitermination protein NusB.